A 231-amino-acid chain; its full sequence is Regulatory factor X-associated protein (231 aa).

Positions 1–163 (MEAQAVPEGS…GNVKLEESTD (163 aa)) are disordered. Positions 50 to 65 (ADAEDEAGDDDADLLD) are enriched in acidic residues. The span at 115 to 138 (KQRKPWMCKKHRNKMYKDKYKKKK) shows a compositional bias: basic residues. The short motif at 123-138 (KKHRNKMYKDKYKKKK) is the Nuclear localization signal element. K157 participates in a covalent cross-link: Glycyl lysine isopeptide (Lys-Gly) (interchain with G-Cter in SUMO2).

In terms of assembly, RFX consists of at least 3 different subunits; RFXAP, RFX5 and RFX-B/RFXANK; with each subunit representing a separate complementation group. RFX forms cooperative DNA binding complexes with X2BP and CBF/NF-Y. RFX associates with CIITA to form an active transcriptional complex. Post-translationally, phosphorylated.

The protein resides in the nucleus. Its function is as follows. Part of the RFX complex that binds to the X-box of MHC II promoters. The protein is Regulatory factor X-associated protein (Rfxap) of Mus musculus (Mouse).